The primary structure comprises 373 residues: Chorismate synthase (373 aa).

NADP(+) contacts are provided by R48 and R54. FMN-binding positions include 125–127 (RSS), 248–249 (NA), G288, 303–307 (KPTSS), and R329.

It belongs to the chorismate synthase family. As to quaternary structure, homotetramer. Requires FMNH2 as cofactor.

The catalysed reaction is 5-O-(1-carboxyvinyl)-3-phosphoshikimate = chorismate + phosphate. Its pathway is metabolic intermediate biosynthesis; chorismate biosynthesis; chorismate from D-erythrose 4-phosphate and phosphoenolpyruvate: step 7/7. Functionally, catalyzes the anti-1,4-elimination of the C-3 phosphate and the C-6 proR hydrogen from 5-enolpyruvylshikimate-3-phosphate (EPSP) to yield chorismate, which is the branch point compound that serves as the starting substrate for the three terminal pathways of aromatic amino acid biosynthesis. This reaction introduces a second double bond into the aromatic ring system. The protein is Chorismate synthase of Colwellia psychrerythraea (strain 34H / ATCC BAA-681) (Vibrio psychroerythus).